The primary structure comprises 230 residues: Uracil-DNA glycosylase (230 aa).

The active-site Proton acceptor is the aspartate 65.

It belongs to the uracil-DNA glycosylase (UDG) superfamily. UNG family.

It is found in the cytoplasm. It catalyses the reaction Hydrolyzes single-stranded DNA or mismatched double-stranded DNA and polynucleotides, releasing free uracil.. Its function is as follows. Excises uracil residues from the DNA which can arise as a result of misincorporation of dUMP residues by DNA polymerase or due to deamination of cytosine. The sequence is that of Uracil-DNA glycosylase from Lactiplantibacillus plantarum (strain ATCC BAA-793 / NCIMB 8826 / WCFS1) (Lactobacillus plantarum).